We begin with the raw amino-acid sequence, 125 residues long: Acyl carrier protein, mitochondrial (125 aa).

A mitochondrion-targeting transit peptide spans 1 to 36; it reads MFRSVCRISSRVAPSAYRTIMGRSVMSNTILAQRFY. Positions 43 to 122 constitute a Carrier domain; it reads DQVSQRVIDV…ETVDYIASNP (80 aa). At S82 the chain carries O-(pantetheine 4'-phosphoryl)serine.

The protein belongs to the acyl carrier protein (ACP) family. In terms of assembly, complex I is composed of about 30 different subunits. 4'-phosphopantetheine is transferred from CoA to a specific serine of apo-ACP by acpS. This modification is essential for activity because fatty acids are bound in thioester linkage to the sulfhydryl of the prosthetic group.

The protein resides in the mitochondrion. It participates in lipid metabolism; fatty acid biosynthesis. Its function is as follows. Carrier of the growing fatty acid chain in fatty acid biosynthesis. May be involved in the synthesis of very-long-chain fatty acids. Accessory and non-catalytic subunit of the mitochondrial membrane respiratory chain NADH dehydrogenase (Complex I), which functions in the transfer of electrons from NADH to the respiratory chain. This chain is Acyl carrier protein, mitochondrial (ACP1), found in Saccharomyces cerevisiae (strain ATCC 204508 / S288c) (Baker's yeast).